A 299-amino-acid chain; its full sequence is DNA-binding transcriptional repressor CapW (299 aa).

Residues 1-15 (MPDNFREGDKQDSQK) show a composition bias toward basic and acidic residues. The segment at 1 to 21 (MPDNFREGDKQDSQKGRQGAR) is disordered. Residues 1–95 (MPDNFREGDK…LFQPVYMTSS (95 aa)) are winged HTH domain. The tract at residues 96–207 (LECYLNDLLQ…LSRIVQAQNA (112 aa)) is WYL domain. A WYL domain is found at 131 to 211 (LRRLDTDVVS…VQAQNAGPDE (81 aa)). Positions 156–200 (YQSMSDPQGSKRTLTPHSLVHDGYRWHTRAWCHKRGEYRDFLLSR) are probable ligand-binding region. Positions 208 to 299 (GPDEERANGD…KDEIYALLKQ (92 aa)) are WCX domain.

In terms of assembly, homodimer.

Functionally, transcriptional regulator of a CBASS antivirus system. CBASS (cyclic oligonucleotide-based antiphage signaling system) provides immunity against bacteriophage. The CD-NTase protein synthesizes cyclic nucleotides in response to infection; these serve as specific second messenger signals. The signals activate a diverse range of effectors, leading to bacterial cell death and thus abortive phage infection. A type III CBASS system. Expression of this CBASS system (Cap18-Cap6-Cap7-CdnC-CapW-Cap17) in a susceptible E.coli (strain MG1655) confers resistance to bacteriophage P1. Binds specifically to and represses expression from the CBASS promoter, found between the genes for divergently transcribed capW and cdnC. The chain is DNA-binding transcriptional repressor CapW from Escherichia coli (strain KTE188).